The following is a 733-amino-acid chain: Protein OBERON 3 (733 aa).

Over residues methionine 1–arginine 15 the composition is skewed to basic and acidic residues. Disordered stretches follow at residues methionine 1–lysine 42 and asparagine 118–asparagine 142. The span at proline 21 to threonine 30 shows a compositional bias: polar residues. A coiled-coil region spans residues asparagine 120–leucine 153. The PHD-type zinc-finger motif lies at serine 436–lysine 500. The segment at valine 592–lysine 614 is disordered. Residues methionine 644–valine 733 are a coiled coil.

As to quaternary structure, self-interacts. Interacts with OBE1 and OBE2. Interacts with OBE4.

It localises to the nucleus. In terms of biological role, probable transcription factor that functions redundantly with OBE4 in specification of the hypophysis and establishment of the embryonic root. Involved in the activation of ARF5/MP-dependent gene expression during embryonic root meristem initiation. Involved in shoot meristem homeostasis. This is Protein OBERON 3 from Arabidopsis thaliana (Mouse-ear cress).